The following is an 862-amino-acid chain: Rab GTPase-binding effector protein 1 (862 aa).

Alanine 2 is modified (N-acetylalanine). A coiled-coil region spans residues 11 to 345 (DVSLQQRVAE…KKADVEEEIK (335 aa)). Lysine 282 carries the N6-acetyllysine modification. Residues 315-338 (ELKKKDQEDDEQQRLNKRKDHKKA) form a disordered region. 3 positions are modified to phosphoserine: serine 374, serine 377, and serine 407. Threonine 408 carries the post-translational modification Phosphothreonine. The residue at position 410 (serine 410) is a Phosphoserine. Positions 435-447 (DESDFGPLVGADS) are interaction with AP1G1, AP1G2, GGA1, GGA2 and GGA3. A coiled-coil region spans residues 534–816 (DMCSNYEKQL…LQTELDVSEQ (283 aa)).

This sequence belongs to the rabaptin family. As to quaternary structure, homodimer when bound to RAB5A. Heterodimer with RABGEF1. The heterodimer binds RAB4A and RAB5A that have been activated by GTP-binding. Interacts with TSC2. Interacts with GGA1 (via GAE domain), GGA2 (via GAE domain) and GGA3 (via GAE domain). Interacts with AP1G1 (via GAE domain). Interacts with AP1G2 (via GAE domain). Interacts with ECPAS. Interacts with KCNH1. Interacts with PKD1 (via C-terminal domain) and GGA1; the interactions recruit PKD1:PKD2 complex to GGA1 and ARL3 at trans-Golgi network. In terms of processing, proteolytic cleavage by caspases in apoptotic cells causes loss of endosome fusion activity.

The protein localises to the cytoplasm. The protein resides in the early endosome. It localises to the recycling endosome. It is found in the cytoplasmic vesicle. Its function is as follows. Rab effector protein acting as linker between gamma-adaptin, RAB4A and RAB5A. Involved in endocytic membrane fusion and membrane trafficking of recycling endosomes. Involved in KCNH1 channels trafficking to and from the cell membrane. Stimulates RABGEF1 mediated nucleotide exchange on RAB5A. Mediates the traffic of PKD1:PKD2 complex from the endoplasmic reticulum through the Golgi to the cilium. This is Rab GTPase-binding effector protein 1 (RABEP1) from Homo sapiens (Human).